A 504-amino-acid chain; its full sequence is Arabinose import ATP-binding protein AraG (504 aa).

2 ABC transporter domains span residues 8–243 (LSFR…MVGR) and 256–499 (YGEE…MPKV). An ATP-binding site is contributed by 40–47 (GENGAGKS).

Belongs to the ABC transporter superfamily. Arabinose importer (TC 3.A.1.2.2) family. The complex is composed of two ATP-binding proteins (AraG), two transmembrane proteins (AraH) and a solute-binding protein (AraF).

The protein resides in the cell inner membrane. It carries out the reaction L-arabinose(out) + ATP + H2O = L-arabinose(in) + ADP + phosphate + H(+). Functionally, part of the ABC transporter complex AraFGH involved in arabinose import. Responsible for energy coupling to the transport system. This is Arabinose import ATP-binding protein AraG from Shigella boydii serotype 4 (strain Sb227).